A 1029-amino-acid chain; its full sequence is Protein translocase subunit SecA (1029 aa).

ATP is bound by residues Q143, 161 to 165, and D661; that span reads GEGKT. The segment at 953 to 1029 is disordered; that stretch reads EQEQKKSQVQ…GKKYKNCCGK (77 aa). 2 stretches are compositionally biased toward basic and acidic residues: residues 966–975 and 984–996; these read LVARHEKAET and PEGR…ENGK. C1015, C1017, C1026, and C1027 together coordinate Zn(2+).

This sequence belongs to the SecA family. Monomer and homodimer. Part of the essential Sec protein translocation apparatus which comprises SecA, SecYEG and auxiliary proteins SecDF. Other proteins may also be involved. Zn(2+) is required as a cofactor.

It is found in the cell inner membrane. It localises to the cytoplasm. It carries out the reaction ATP + H2O + cellular proteinSide 1 = ADP + phosphate + cellular proteinSide 2.. Its function is as follows. Part of the Sec protein translocase complex. Interacts with the SecYEG preprotein conducting channel. Has a central role in coupling the hydrolysis of ATP to the transfer of proteins into and across the cell membrane, serving as an ATP-driven molecular motor driving the stepwise translocation of polypeptide chains across the membrane. This Chlorobium phaeobacteroides (strain BS1) protein is Protein translocase subunit SecA.